A 203-amino-acid polypeptide reads, in one-letter code: MAMVTADASAAADAATKQPDVEKDYSSYNGASTAGAGGGGVVESVVARWRREDMLDKCPLALHAAAAAFAFVALVLVASNQHGDWMQFDRYQEYMYLLAIAALAFAYSLAQALRHAHRMRGGADPIPAPSARLFDFIADQVVAYLLMSALSAAIPITNRMRTAVINNFTDATAAAISMAFLAFVALALSATVSGYKLSRQMYM.

Topologically, residues Met-1–Lys-57 are cytoplasmic. The chain crosses the membrane as a helical span at residues Cys-58 to Ala-78. Residues Ser-79 to Gln-92 lie on the Extracellular side of the membrane. The chain crosses the membrane as a helical span at residues Glu-93–Leu-113. Residues Arg-114–Asp-135 lie on the Cytoplasmic side of the membrane. The helical transmembrane segment at Phe-136–Ile-156 threads the bilayer. Over Thr-157 to Ala-171 the chain is Extracellular. N-linked (GlcNAc...) asparagine glycosylation occurs at Asn-167. A helical membrane pass occupies residues Thr-172–Val-192. The Cytoplasmic portion of the chain corresponds to Ser-193–Met-203.

Belongs to the Casparian strip membrane proteins (CASP) family. As to quaternary structure, homodimer and heterodimers.

Its subcellular location is the cell membrane. This Hordeum vulgare subsp. vulgare (Domesticated barley) protein is CASP-like protein 4B2.